Consider the following 100-residue polypeptide: Large ribosomal subunit protein bL27 (100 aa).

A propeptide spanning residues 1 to 9 is cleaved from the precursor; it reads MLSINLSLC.

Belongs to the bacterial ribosomal protein bL27 family. Post-translationally, the N-terminus is cleaved by ribosomal processing cysteine protease Prp.

The chain is Large ribosomal subunit protein bL27 from Clostridium acetobutylicum (strain ATCC 824 / DSM 792 / JCM 1419 / IAM 19013 / LMG 5710 / NBRC 13948 / NRRL B-527 / VKM B-1787 / 2291 / W).